A 399-amino-acid polypeptide reads, in one-letter code: MDDFDRDLDNELEFSHKSTKNVKVHATFESMNLKPDLLKGIYGYGFEAPSAIQSRAIMQIINGRDTIAQAQSGTGKTATFSIGMLQAIDTNAKDCQALILSPTRELAVQIQNVVKHLGDYMNIHTHACIGGTHVGDDIKKLKQGQQIVSGTPGRVVDMVKRQQLSTRNIKMLILDEADELFTKGFKEQIYEVYKYLPPSVQVVVVSATLSREVLEMTNKFTTDPVKILVKRDQITLEGIKQYHVQCEKEDWKFDTLCDLYDNLTITQAVIFCNTKLKVNWLTDQMRKQNFTVVSMHGDMKQDERDSIMNDFRTGNSRVLISTDVWARGIDVQQVSLVINYDLPTDKENYIHRIGRSGRFGRKGVAINLITKEDVATLRDFEKYYSTKIREMPMNINDIM.

The Q motif signature appears at 26 to 54 (ATFESMNLKPDLLKGIYGYGFEAPSAIQS). The Helicase ATP-binding domain maps to 57-227 (IMQIINGRDT…NKFTTDPVKI (171 aa)). 70–77 (AQSGTGKT) is an ATP binding site. The DEAD box signature appears at 175 to 178 (DEAD). Residues 238 to 399 (GIKQYHVQCE…EMPMNINDIM (162 aa)) form the Helicase C-terminal domain.

The protein belongs to the DEAD box helicase family. DDX48/FAL1 subfamily.

Its subcellular location is the nucleus. The protein resides in the nucleolus. It carries out the reaction ATP + H2O = ADP + phosphate + H(+). Its function is as follows. ATP-dependent RNA helicase involved in 40S ribosomal subunit biogenesis. Required for the processing and cleavage of 35S pre-rRNA at sites A0, A1, and A2, leading to mature 18S rRNA. The sequence is that of ATP-dependent RNA helicase FAL1 (FAL1) from Scheffersomyces stipitis (strain ATCC 58785 / CBS 6054 / NBRC 10063 / NRRL Y-11545) (Yeast).